The chain runs to 352 residues: Adenosine deaminase (352 aa).

Residues His24 and His26 each contribute to the Zn(2+) site. Residues His26, Asp28, and Gly181 each contribute to the substrate site. Zn(2+) is bound at residue His208. Residue Glu211 is the Proton donor of the active site. Asp290 is a binding site for Zn(2+).

Belongs to the metallo-dependent hydrolases superfamily. Adenosine and AMP deaminases family. Adenosine deaminase subfamily. The cofactor is Zn(2+).

It catalyses the reaction adenosine + H2O + H(+) = inosine + NH4(+). The catalysed reaction is 2'-deoxyadenosine + H2O + H(+) = 2'-deoxyinosine + NH4(+). In terms of biological role, catalyzes the hydrolytic deamination of adenosine and 2-deoxyadenosine. This Lactococcus lactis subsp. lactis (strain IL1403) (Streptococcus lactis) protein is Adenosine deaminase.